A 123-amino-acid polypeptide reads, in one-letter code: uncharacterized protein (123 aa).

To M.tuberculosis Rv0477.

This is an uncharacterized protein from Mycobacterium leprae (strain TN).